The following is a 345-amino-acid chain: L-threonine 3-dehydrogenase (345 aa).

Cys42 is a binding site for Zn(2+). Catalysis depends on charge relay system residues Thr44 and His47. Residues His67, Glu68, Cys97, Cys100, Cys103, and Cys111 each coordinate Zn(2+). Residues Ile179, Asp199, Arg204, 266-268 (LGI), and 290-291 (IY) each bind NAD(+).

Belongs to the zinc-containing alcohol dehydrogenase family. In terms of assembly, homotetramer. The cofactor is Zn(2+).

It localises to the cytoplasm. The enzyme catalyses L-threonine + NAD(+) = (2S)-2-amino-3-oxobutanoate + NADH + H(+). Its pathway is amino-acid degradation; L-threonine degradation via oxydo-reductase pathway; glycine from L-threonine: step 1/2. In terms of biological role, catalyzes the NAD(+)-dependent oxidation of L-threonine to 2-amino-3-ketobutyrate. The chain is L-threonine 3-dehydrogenase from Rhizobium etli (strain ATCC 51251 / DSM 11541 / JCM 21823 / NBRC 15573 / CFN 42).